The primary structure comprises 580 residues: Arginine--tRNA ligase (580 aa).

The 'HIGH' region motif lies at 137-147 (ANPTGPLHIGH).

Belongs to the class-I aminoacyl-tRNA synthetase family. As to quaternary structure, monomer.

Its subcellular location is the cytoplasm. The catalysed reaction is tRNA(Arg) + L-arginine + ATP = L-arginyl-tRNA(Arg) + AMP + diphosphate. This chain is Arginine--tRNA ligase, found in Anaplasma phagocytophilum (strain HZ).